The sequence spans 461 residues: Calcitonin gene-related peptide type 1 receptor (461 aa).

Residues 1 to 22 (MEKKCTLYFLVLLPFFMILVTA) form the signal peptide. Topologically, residues 23–139 (ELEESPEDSI…NTHEKVKTAL (117 aa)) are extracellular. 3 disulfide bridges follow: Cys48-Cys74, Cys65-Cys105, and Cys88-Cys127. N-linked (GlcNAc...) asparagine glycans are attached at residues Asn66, Asn118, and Asn123. A helical transmembrane segment spans residues 140–164 (NLFYLTIIGHGLSIASLLISLGIFF). Over 165–175 (YFKSLSCQRIT) the chain is Cytoplasmic. The helical transmembrane segment at 176–198 (LHKNLFFSFVCNSVVTIIHLTAV) threads the bilayer. Topologically, residues 199–209 (ANNQALVATNP) are extracellular. A helical membrane pass occupies residues 210-238 (VSCKVSQFIHLYLMGCNYFWMLCEGIYLH). The Cytoplasmic portion of the chain corresponds to 239–252 (TLIVVAVFAEKQHL). Residues 253-273 (MWYYFLGWGFPLIPACIHAIA) form a helical membrane-spanning segment. Residues 274–289 (RSLYYNDNCWISSDTH) lie on the Extracellular side of the membrane. Residues 288-289 (TH) are required for RAMP3 interaction. Residues 290 to 314 (LLYIIHGPICAALLVNLFFLLNIVR) form a helical membrane-spanning segment. At 315–329 (VLITKLKVTHQAESN) the chain is on the cytoplasmic side. The helical transmembrane segment at 330–351 (LYMKAVRATLILVPLLGIEFVL) threads the bilayer. At 352-366 (IPWRPEGKIAEEVYD) the chain is on the extracellular side. Residues 367 to 387 (YIMHILMHFQGLLVSTIFCFF) form a helical membrane-spanning segment. Residues Ser420 and Ser445 each carry the phosphoserine modification.

It belongs to the G-protein coupled receptor 2 family. Heterodimer of CALCRL and RAMP1; the receptor complex functions as CGRP receptor. Heterodimer of CALCRL and RAMP2 or CALCRL and RAMP3; the complexes function as adrenomedullin receptor. As to expression, predominantly expressed in the lung and heart.

It localises to the cell membrane. Functionally, g protein-coupled receptor which specificity is determined by its interaction with receptor-activity-modifying proteins (RAMPs). Together with RAMP1, form the receptor complex for calcitonin-gene-related peptides CALCA/CGRP1 and CALCB/CGRP2. Together with RAMP2 or RAMP3, function as receptor complexes for adrenomedullin (ADM and ADM2). Ligand binding causes a conformation change that triggers signaling via guanine nucleotide-binding proteins (G proteins) and modulates the activity of downstream effectors. Activates cAMP-dependent pathway. The polypeptide is Calcitonin gene-related peptide type 1 receptor (Homo sapiens (Human)).